A 400-amino-acid chain; its full sequence is GTPase Obg (400 aa).

In terms of domain architecture, Obg spans 1-159; it reads MKFVDEVQIR…RTLKLELLLL (159 aa). The OBG-type G domain occupies 160-333; that stretch reads ADVGMLGLPN…VCYDILDLLD (174 aa). GTP is bound by residues 166–173, 191–195, 213–216, 283–286, and 314–316; these read GLPNAGKS, FTTLV, DIPG, NKMD, and TAI. 2 residues coordinate Mg(2+): Ser-173 and Thr-193.

The protein belongs to the TRAFAC class OBG-HflX-like GTPase superfamily. OBG GTPase family. In terms of assembly, monomer. Requires Mg(2+) as cofactor.

It is found in the cytoplasm. An essential GTPase which binds GTP, GDP and possibly (p)ppGpp with moderate affinity, with high nucleotide exchange rates and a fairly low GTP hydrolysis rate. Plays a role in control of the cell cycle, stress response, ribosome biogenesis and in those bacteria that undergo differentiation, in morphogenesis control. The sequence is that of GTPase Obg from Aeromonas hydrophila subsp. hydrophila (strain ATCC 7966 / DSM 30187 / BCRC 13018 / CCUG 14551 / JCM 1027 / KCTC 2358 / NCIMB 9240 / NCTC 8049).